We begin with the raw amino-acid sequence, 323 residues long: uncharacterized protein (323 aa).

Residues 16-95 form the S4 RNA-binding domain; it reads QRIDQFCLKI…DKLKIIFEDE (80 aa). Aspartate 148 is an active-site residue.

This sequence belongs to the pseudouridine synthase RluA family.

It catalyses the reaction a uridine in RNA = a pseudouridine in RNA. This is an uncharacterized protein from Mycoplasma genitalium (strain ATCC 33530 / DSM 19775 / NCTC 10195 / G37) (Mycoplasmoides genitalium).